The chain runs to 197 residues: Putative peptidyl-prolyl cis-trans isomerase (197 aa).

Residues 14–195 form the PPIase cyclophilin-type domain; it reads GEIKVVMHTN…HDVVIESIDV (182 aa).

This sequence belongs to the cyclophilin-type PPIase family.

The catalysed reaction is [protein]-peptidylproline (omega=180) = [protein]-peptidylproline (omega=0). In terms of biological role, PPIases accelerate the folding of proteins. It catalyzes the cis-trans isomerization of proline imidic peptide bonds in oligopeptides. This is Putative peptidyl-prolyl cis-trans isomerase from Staphylococcus aureus (strain COL).